Consider the following 154-residue polypeptide: 6,7-dimethyl-8-ribityllumazine synthase (154 aa).

5-amino-6-(D-ribitylamino)uracil is bound by residues F21, 55-57 (AFE), and 79-81 (CVI). 84–85 (AT) is a binding site for (2S)-2-hydroxy-3-oxobutyl phosphate. Residue H87 is the Proton donor of the active site. F111 contributes to the 5-amino-6-(D-ribitylamino)uracil binding site. R125 is a (2S)-2-hydroxy-3-oxobutyl phosphate binding site.

Belongs to the DMRL synthase family. Forms an icosahedral capsid composed of 60 subunits, arranged as a dodecamer of pentamers.

It catalyses the reaction (2S)-2-hydroxy-3-oxobutyl phosphate + 5-amino-6-(D-ribitylamino)uracil = 6,7-dimethyl-8-(1-D-ribityl)lumazine + phosphate + 2 H2O + H(+). The protein operates within cofactor biosynthesis; riboflavin biosynthesis; riboflavin from 2-hydroxy-3-oxobutyl phosphate and 5-amino-6-(D-ribitylamino)uracil: step 1/2. Functionally, catalyzes the formation of 6,7-dimethyl-8-ribityllumazine by condensation of 5-amino-6-(D-ribitylamino)uracil with 3,4-dihydroxy-2-butanone 4-phosphate. This is the penultimate step in the biosynthesis of riboflavin. The polypeptide is 6,7-dimethyl-8-ribityllumazine synthase (Macrococcus caseolyticus (strain JCSC5402) (Macrococcoides caseolyticum)).